A 104-amino-acid chain; its full sequence is Pyrimidine/purine nucleoside phosphorylase (104 aa).

Belongs to the nucleoside phosphorylase PpnP family.

The enzyme catalyses a purine D-ribonucleoside + phosphate = a purine nucleobase + alpha-D-ribose 1-phosphate. It carries out the reaction adenosine + phosphate = alpha-D-ribose 1-phosphate + adenine. The catalysed reaction is cytidine + phosphate = cytosine + alpha-D-ribose 1-phosphate. It catalyses the reaction guanosine + phosphate = alpha-D-ribose 1-phosphate + guanine. The enzyme catalyses inosine + phosphate = alpha-D-ribose 1-phosphate + hypoxanthine. It carries out the reaction thymidine + phosphate = 2-deoxy-alpha-D-ribose 1-phosphate + thymine. The catalysed reaction is uridine + phosphate = alpha-D-ribose 1-phosphate + uracil. It catalyses the reaction xanthosine + phosphate = alpha-D-ribose 1-phosphate + xanthine. Catalyzes the phosphorolysis of diverse nucleosides, yielding D-ribose 1-phosphate and the respective free bases. Can use uridine, adenosine, guanosine, cytidine, thymidine, inosine and xanthosine as substrates. Also catalyzes the reverse reactions. This Leptospira borgpetersenii serovar Hardjo-bovis (strain L550) protein is Pyrimidine/purine nucleoside phosphorylase.